A 1227-amino-acid chain; its full sequence is DNA-directed RNA polymerase subunit beta (1227 aa).

This sequence belongs to the RNA polymerase beta chain family. In terms of assembly, the RNAP catalytic core consists of 2 alpha, 1 beta, 1 beta' and 1 omega subunit. When a sigma factor is associated with the core the holoenzyme is formed, which can initiate transcription.

The enzyme catalyses RNA(n) + a ribonucleoside 5'-triphosphate = RNA(n+1) + diphosphate. DNA-dependent RNA polymerase catalyzes the transcription of DNA into RNA using the four ribonucleoside triphosphates as substrates. In Chloroflexus aurantiacus (strain ATCC 29366 / DSM 635 / J-10-fl), this protein is DNA-directed RNA polymerase subunit beta.